A 526-amino-acid chain; its full sequence is Variant surface glycoprotein MITAT 1.4A (526 aa).

A signal peptide spans 1–33 (MDCHTKETLGVTQWRRSTMLTLSLLYAITPADG). Intrachain disulfides connect Cys47-Cys173 and Cys154-Cys215. The disordered stretch occupies residues 157–193 (NEGGDGDGKDQLAPKGCRHGTEADFDAGAGPAESEVA). N-linked (GlcNAc...) asparagine glycosylation occurs at Asn453. Residue Asp503 is the site of GPI-anchor amidated aspartate attachment. Residues 504-526 (SSILVTKKFALTVVSAAFVALLF) constitute a propeptide, removed in mature form.

Its subcellular location is the cell membrane. VSG forms a coat on the surface of the parasite. The trypanosome evades the immune response of the host by expressing a series of antigenically distinct VSGs from an estimated 1000 VSG genes. This is Variant surface glycoprotein MITAT 1.4A from Trypanosoma brucei brucei.